We begin with the raw amino-acid sequence, 345 residues long: Trans-3-hydroxy-L-proline dehydratase (345 aa).

S90 (proton acceptor) is an active-site residue. Substrate-binding positions include 91 to 92 (GS), D252, and 257 to 258 (GT).

This sequence belongs to the proline racemase family.

The enzyme catalyses trans-3-hydroxy-L-proline = 1-pyrroline-2-carboxylate + H2O. Functionally, catalyzes the dehydration of trans-3-hydroxy-L-proline (t3LHyp) to Delta(1)-pyrroline-2-carboxylate (Pyr2C). May be involved in a degradation pathway that converts t3LHyp to L-proline, which would allow S.novella to grow on t3LHyp as a sole carbon source. This Ancylobacter novellus (strain ATCC 8093 / DSM 506 / JCM 20403 / CCM 1077 / IAM 12100 / NBRC 12443 / NCIMB 10456) (Starkeya novella) protein is Trans-3-hydroxy-L-proline dehydratase.